The sequence spans 157 residues: Jacalin-related lectin 15 (157 aa).

Residues 13–152 (ADKLEAKGGN…LTSLGAYFAP (140 aa)) form the Jacalin-type lectin domain.

Belongs to the jacalin lectin family. In terms of tissue distribution, expressed in stems, leaves and flowers. Not detected in roots.

Its function is as follows. Confers broad resistance to potexviruses. Inhibits virus accumulation at the cellular level. The sequence is that of Jacalin-related lectin 15 (JAL15) from Arabidopsis thaliana (Mouse-ear cress).